A 122-amino-acid polypeptide reads, in one-letter code: Structural protein p14.5 (122 aa).

2 disordered regions span residues 1–27 and 85–122; these read MADF…LEYD and TSLV…HKSK. Ala2 bears the N-acetylalanine; by host mark. Residues 105–122 show a composition bias toward basic residues; sequence KPKKKKHLFPKLSSHKSK.

The protein belongs to the asfivirus structural protein p14.5 family. In terms of assembly, interacts with the major capsid protein. Interacts with host IRF3; this interaction interferes with the recruitment of IRF3 to TBK1. In terms of processing, acetylated.

The protein resides in the virion. Its function is as follows. Structural protein required for transport of intracellular particles from the assembly sites to the plasma membrane. Binds to both ssDNA and dsDNA. Suppressed the activation of the cGAS/STING pathway by interfering with the recruitment of IRF3 to TBK1, which in turn suppresses IRF3 phosphorylation, decreasing interferon production. The sequence is that of Structural protein p14.5 from African swine fever virus (isolate Tick/Malawi/Lil 20-1/1983) (ASFV).